Here is a 257-residue protein sequence, read N- to C-terminus: Imidazole glycerol phosphate synthase subunit HisF (257 aa).

Catalysis depends on residues aspartate 12 and aspartate 131.

This sequence belongs to the HisA/HisF family. Heterodimer of HisH and HisF.

The protein localises to the cytoplasm. It catalyses the reaction 5-[(5-phospho-1-deoxy-D-ribulos-1-ylimino)methylamino]-1-(5-phospho-beta-D-ribosyl)imidazole-4-carboxamide + L-glutamine = D-erythro-1-(imidazol-4-yl)glycerol 3-phosphate + 5-amino-1-(5-phospho-beta-D-ribosyl)imidazole-4-carboxamide + L-glutamate + H(+). Its pathway is amino-acid biosynthesis; L-histidine biosynthesis; L-histidine from 5-phospho-alpha-D-ribose 1-diphosphate: step 5/9. In terms of biological role, IGPS catalyzes the conversion of PRFAR and glutamine to IGP, AICAR and glutamate. The HisF subunit catalyzes the cyclization activity that produces IGP and AICAR from PRFAR using the ammonia provided by the HisH subunit. The polypeptide is Imidazole glycerol phosphate synthase subunit HisF (Marinomonas sp. (strain MWYL1)).